A 122-amino-acid polypeptide reads, in one-letter code: Holo-[acyl-carrier-protein] synthase (122 aa).

2 residues coordinate Mg(2+): Asp8 and Glu56.

The protein belongs to the P-Pant transferase superfamily. AcpS family. It depends on Mg(2+) as a cofactor.

Its subcellular location is the cytoplasm. The catalysed reaction is apo-[ACP] + CoA = holo-[ACP] + adenosine 3',5'-bisphosphate + H(+). Its function is as follows. Transfers the 4'-phosphopantetheine moiety from coenzyme A to a Ser of acyl-carrier-protein. The sequence is that of Holo-[acyl-carrier-protein] synthase from Salinispora arenicola (strain CNS-205).